The following is a 388-amino-acid chain: Succinate--CoA ligase [ADP-forming] subunit beta (388 aa).

The region spanning 9–244 (KQLFARYGLP…QSQEDPREAQ (236 aa)) is the ATP-grasp domain. ATP is bound by residues lysine 46, 53-55 (GRG), glutamate 99, threonine 102, and glutamate 107. Positions 199 and 213 each coordinate Mg(2+). Substrate contacts are provided by residues asparagine 264 and 321–323 (GIV).

It belongs to the succinate/malate CoA ligase beta subunit family. In terms of assembly, heterotetramer of two alpha and two beta subunits. It depends on Mg(2+) as a cofactor.

The enzyme catalyses succinate + ATP + CoA = succinyl-CoA + ADP + phosphate. The catalysed reaction is GTP + succinate + CoA = succinyl-CoA + GDP + phosphate. Its pathway is carbohydrate metabolism; tricarboxylic acid cycle; succinate from succinyl-CoA (ligase route): step 1/1. Succinyl-CoA synthetase functions in the citric acid cycle (TCA), coupling the hydrolysis of succinyl-CoA to the synthesis of either ATP or GTP and thus represents the only step of substrate-level phosphorylation in the TCA. The beta subunit provides nucleotide specificity of the enzyme and binds the substrate succinate, while the binding sites for coenzyme A and phosphate are found in the alpha subunit. In Escherichia coli O8 (strain IAI1), this protein is Succinate--CoA ligase [ADP-forming] subunit beta.